Reading from the N-terminus, the 674-residue chain is Secretin GspD (674 aa).

The N-terminal stretch at 1–24 is a signal peptide; the sequence is MKYWLKKSSWLLAGSLLSTPLAMA. The tract at residues 25 to 121 is N0; that stretch reads NEFSASFKGT…VLSGEERANG (97 aa). Residues 123-187 are N1; the sequence is EVITQVVAVK…EIIRRVDQAG (65 aa). The interval 188–261 is N2; it reads DKEIEVVELN…LIKQLDVEMA (74 aa). Residues 264–338 form an N3 region; that stretch reads GNNRVVYLKY…AMLEVIGQLD (75 aa). The secretin stretch occupies residues 343-612; the sequence is QVLIEALIVE…VFIKPTIIRD (270 aa). The cap gate stretch occupies residues 395–417; it reads DTTQTKAVYDTNNNFLRNETTTT. The s domain stretch occupies residues 614-674; it reads VTADGITQRK…AFIEQMEAKQ (61 aa).

Belongs to the bacterial secretin family. GSP D subfamily. In terms of assembly, forms a cylindrical channel with 15 subunits; unlike E.coli no 16-subunit channels are seen. The closed pentadeacameric channels are 195 Angstroms long and 145 Angstroms in diameter. Each subunit turns in a clock-wise manner around the channel.

Its subcellular location is the cell outer membrane. Functionally, involved in a type II secretion system (T2SS, formerly general secretion pathway, GSP) for the export of proteins. Required for secretion of cholera toxin through the outer membrane. This subunit forms the outer membrane channel. The protein is Secretin GspD (epsD) of Vibrio cholerae serotype O1 (strain ATCC 39315 / El Tor Inaba N16961).